Consider the following 303-residue polypeptide: Recombination-associated protein RdgC (303 aa).

The protein belongs to the RdgC family.

The protein localises to the cytoplasm. It is found in the nucleoid. Its function is as follows. May be involved in recombination. In Yersinia pseudotuberculosis serotype O:1b (strain IP 31758), this protein is Recombination-associated protein RdgC.